The primary structure comprises 933 residues: Isoleucine--tRNA ligase (933 aa).

The 'HIGH' region motif lies at 57–67 (PYANGNIHMGH). E556 is a binding site for L-isoleucyl-5'-AMP. The short motif at 597–601 (KMSKS) is the 'KMSKS' region element. K600 is a binding site for ATP. Residues C891, C894, C911, and C914 each contribute to the Zn(2+) site.

This sequence belongs to the class-I aminoacyl-tRNA synthetase family. IleS type 1 subfamily. In terms of assembly, monomer. It depends on Zn(2+) as a cofactor.

Its subcellular location is the cytoplasm. It catalyses the reaction tRNA(Ile) + L-isoleucine + ATP = L-isoleucyl-tRNA(Ile) + AMP + diphosphate. In terms of biological role, catalyzes the attachment of isoleucine to tRNA(Ile). As IleRS can inadvertently accommodate and process structurally similar amino acids such as valine, to avoid such errors it has two additional distinct tRNA(Ile)-dependent editing activities. One activity is designated as 'pretransfer' editing and involves the hydrolysis of activated Val-AMP. The other activity is designated 'posttransfer' editing and involves deacylation of mischarged Val-tRNA(Ile). This is Isoleucine--tRNA ligase from Pediococcus pentosaceus (strain ATCC 25745 / CCUG 21536 / LMG 10740 / 183-1w).